The sequence spans 157 residues: MAGTIEVLIPGGEANPGPPLGPELGPTPVDVQDVVQTINDETDAFDGMEVPVTVEYEDTGDFSISVGVPPTAELIKDEAGFESGSGEPQENFVANMSVDQVQKIAEQKSSDLLSYDTFNAAKEVVGTCTSLGVTIDGNNPREFKSRMEDGEYDDILK.

Disordered regions lie at residues 1 to 28 (MAGTIEVLIPGGEANPGPPLGPELGPTP) and 138 to 157 (NNPREFKSRMEDGEYDDILK). Basic and acidic residues predominate over residues 139–157 (NPREFKSRMEDGEYDDILK).

It belongs to the universal ribosomal protein uL11 family. As to quaternary structure, part of the ribosomal stalk of the 50S ribosomal subunit. Interacts with L10 and the large rRNA to form the base of the stalk. L10 forms an elongated spine to which L12 dimers bind in a sequential fashion forming a multimeric L10(L12)X complex.

Its function is as follows. Forms part of the ribosomal stalk which helps the ribosome interact with GTP-bound translation factors. The polypeptide is Large ribosomal subunit protein uL11 (Haloquadratum walsbyi (strain DSM 16790 / HBSQ001)).